Here is a 260-residue protein sequence, read N- to C-terminus: Small ribosomal subunit protein uS2 (260 aa).

Residues 228 to 240 (RKETKAENAEEAM) show a composition bias toward basic and acidic residues. A disordered region spans residues 228-260 (RKETKAENAEEAMKQAAEAEAEAAAPAAEESAE). A compositionally biased stretch (low complexity) spans 241–260 (KQAAEAEAEAAAPAAEESAE).

The protein belongs to the universal ribosomal protein uS2 family.

This chain is Small ribosomal subunit protein uS2, found in Oleidesulfovibrio alaskensis (strain ATCC BAA-1058 / DSM 17464 / G20) (Desulfovibrio alaskensis).